We begin with the raw amino-acid sequence, 446 residues long: Histidine--tRNA ligase (446 aa).

Belongs to the class-II aminoacyl-tRNA synthetase family. In terms of assembly, homodimer.

Its subcellular location is the cytoplasm. The catalysed reaction is tRNA(His) + L-histidine + ATP = L-histidyl-tRNA(His) + AMP + diphosphate + H(+). This chain is Histidine--tRNA ligase, found in Paraburkholderia xenovorans (strain LB400).